Consider the following 432-residue polypeptide: Adenylosuccinate synthetase (432 aa).

GTP is bound by residues 12–18 (GDEGKGK) and 40–42 (GHT). Asp-13 serves as the catalytic Proton acceptor. Residues Asp-13 and Gly-40 each contribute to the Mg(2+) site. IMP-binding positions include 13 to 16 (DEGK), 38 to 41 (NAGH), Thr-132, Arg-146, Gln-226, Thr-241, and Arg-305. His-41 functions as the Proton donor in the catalytic mechanism. Position 301–307 (301–307 (VVTGRKR)) interacts with substrate. GTP contacts are provided by residues Arg-307, 333–335 (KLD), and 415–417 (STS).

It belongs to the adenylosuccinate synthetase family. Homodimer. Requires Mg(2+) as cofactor.

The protein resides in the cytoplasm. It carries out the reaction IMP + L-aspartate + GTP = N(6)-(1,2-dicarboxyethyl)-AMP + GDP + phosphate + 2 H(+). It participates in purine metabolism; AMP biosynthesis via de novo pathway; AMP from IMP: step 1/2. Its function is as follows. Plays an important role in the de novo pathway of purine nucleotide biosynthesis. Catalyzes the first committed step in the biosynthesis of AMP from IMP. The chain is Adenylosuccinate synthetase from Rhizobium johnstonii (strain DSM 114642 / LMG 32736 / 3841) (Rhizobium leguminosarum bv. viciae).